We begin with the raw amino-acid sequence, 1167 residues long: Chromosome partition protein Smc (1167 aa).

32–39 (PNGCGKSN) lines the ATP pocket. Coiled coils occupy residues 170 to 274 (ISKY…RIET), 310 to 390 (QREL…HNRD), 468 to 500 (GLQE…LETL), 653 to 870 (ALLR…ERAL), and 982 to 1011 (EYLD…ETRG).

This sequence belongs to the SMC family. Homodimer.

It is found in the cytoplasm. Required for chromosome condensation and partitioning. The protein is Chromosome partition protein Smc of Xanthomonas oryzae pv. oryzae (strain KACC10331 / KXO85).